Consider the following 877-residue polypeptide: Alanine--tRNA ligase (877 aa).

4 residues coordinate Zn(2+): His-566, His-570, Cys-668, and His-672.

This sequence belongs to the class-II aminoacyl-tRNA synthetase family. The cofactor is Zn(2+).

It localises to the cytoplasm. It carries out the reaction tRNA(Ala) + L-alanine + ATP = L-alanyl-tRNA(Ala) + AMP + diphosphate. Functionally, catalyzes the attachment of alanine to tRNA(Ala) in a two-step reaction: alanine is first activated by ATP to form Ala-AMP and then transferred to the acceptor end of tRNA(Ala). Also edits incorrectly charged Ser-tRNA(Ala) and Gly-tRNA(Ala) via its editing domain. The chain is Alanine--tRNA ligase from Staphylococcus aureus (strain USA300 / TCH1516).